The sequence spans 546 residues: Chaperonin GroEL (546 aa).

ATP is bound by residues Thr-30 to Pro-33, Lys-51, Asp-87 to Thr-91, Gly-415, Asn-479 to Ala-481, and Asp-495.

The protein belongs to the chaperonin (HSP60) family. In terms of assembly, forms a cylinder of 14 subunits composed of two heptameric rings stacked back-to-back. Interacts with the co-chaperonin GroES.

The protein resides in the cytoplasm. The enzyme catalyses ATP + H2O + a folded polypeptide = ADP + phosphate + an unfolded polypeptide.. In terms of biological role, together with its co-chaperonin GroES, plays an essential role in assisting protein folding. The GroEL-GroES system forms a nano-cage that allows encapsulation of the non-native substrate proteins and provides a physical environment optimized to promote and accelerate protein folding. The sequence is that of Chaperonin GroEL from Xanthomonas axonopodis pv. citri (strain 306).